A 292-amino-acid chain; its full sequence is tRNA dimethylallyltransferase (292 aa).

10-17 serves as a coordination point for ATP; it reads GPTASGKS. 12 to 17 serves as a coordination point for substrate; the sequence is TASGKS. Interaction with substrate tRNA regions lie at residues 35 to 38 and 159 to 163; these read DSMQ and QRIVR.

Belongs to the IPP transferase family. Monomer. The cofactor is Mg(2+).

It catalyses the reaction adenosine(37) in tRNA + dimethylallyl diphosphate = N(6)-dimethylallyladenosine(37) in tRNA + diphosphate. Functionally, catalyzes the transfer of a dimethylallyl group onto the adenine at position 37 in tRNAs that read codons beginning with uridine, leading to the formation of N6-(dimethylallyl)adenosine (i(6)A). In Chelativorans sp. (strain BNC1), this protein is tRNA dimethylallyltransferase.